The chain runs to 122 residues: Large ribosomal subunit protein uL18 (122 aa).

This sequence belongs to the universal ribosomal protein uL18 family. As to quaternary structure, part of the 50S ribosomal subunit; part of the 5S rRNA/L5/L18/L25 subcomplex. Contacts the 5S and 23S rRNAs.

In terms of biological role, this is one of the proteins that bind and probably mediate the attachment of the 5S RNA into the large ribosomal subunit, where it forms part of the central protuberance. This chain is Large ribosomal subunit protein uL18, found in Dictyoglomus thermophilum (strain ATCC 35947 / DSM 3960 / H-6-12).